The primary structure comprises 540 residues: Probable H/ACA ribonucleoprotein complex subunit 4 (540 aa).

Residues 1–24 (MTTDKKSKSKSSEKSTQEVEQVIK) are disordered. The Nucleophile role is filled by Asp-109. Residues 280-355 (YKRIVVKDSA…VVATIKRVIM (76 aa)) enclose the PUA domain. Residues 414–540 (SPVESMNVDT…DKKEKKKSKN (127 aa)) form a disordered region. Positions 448–494 (KKEKKDKKEKKKDSSDDESEEEKSSKKDKKEKKEKKEKKEKKSSKDD) form a coiled coil. Basic residues predominate over residues 473–489 (KKDKKEKKEKKEKKEKK). Basic and acidic residues-rich tracts occupy residues 490-503 (SSKDDSDDESSKKE) and 513-528 (SDKDSDSEKESSDKKD). The segment covering 529 to 540 (KKDKKEKKKSKN) has biased composition (basic residues).

The protein belongs to the pseudouridine synthase TruB family. In terms of assembly, component of the small nucleolar ribonucleoprotein particles containing H/ACA-type snoRNAs (H/ACA snoRNPs).

It is found in the nucleus. The protein localises to the nucleolus. It carries out the reaction a uridine in RNA = a pseudouridine in RNA. In terms of biological role, plays a central role in ribosomal RNA processing. Probable catalytic subunit of H/ACA small nucleolar ribonucleoprotein (H/ACA snoRNP) complex, which catalyzes pseudouridylation of rRNA. This involves the isomerization of uridine such that the ribose is subsequently attached to C5, instead of the normal N1. Pseudouridine ('psi') residues may serve to stabilize the conformation of rRNAs. This Dictyostelium discoideum (Social amoeba) protein is Probable H/ACA ribonucleoprotein complex subunit 4 (nola4).